A 517-amino-acid polypeptide reads, in one-letter code: Gamma-1-syntrophin (517 aa).

The 84-residue stretch at 57–140 (TVTIRRQTVG…EVTLTVSFLK (84 aa)) folds into the PDZ domain. Residues 283–390 (QIVYMGWCEA…WERAFQTATF (108 aa)) enclose the PH domain.

Belongs to the syntrophin family. Isoform 1, but not isoform 2, interacts with the dystrophin protein DMD and related proteins DTNA and DTNB. Interacts with DGKZ. Brain specific. In CNS, it is expressed in the perikaryon and proximal portion of the neuronal processes. Strong expression in the hippocampus, neuron-rich dendate granule cells, and pyramidal cell layers. Highly expressed in neurons of the cerebral cortex. Also expressed in the cerebellar cortex, deep cerebellar nuclei, thalamus, and basal ganglia. No expression in muscle cells.

It is found in the cytoplasm. The protein resides in the cytoskeleton. It localises to the nucleus. Adapter protein that binds to and probably organizes the subcellular localization of a variety of proteins. May link various receptors to the actin cytoskeleton and the dystrophin glycoprotein complex. May participate in regulating the subcellular location of diacylglycerol kinase-zeta to ensure that diacylglycerol is rapidly inactivated following receptor activation. In Homo sapiens (Human), this protein is Gamma-1-syntrophin (SNTG1).